Consider the following 204-residue polypeptide: GTP cyclohydrolase 1 (204 aa).

Zn(2+) is bound by residues Cys92, His95, and Cys165.

It belongs to the GTP cyclohydrolase I family. As to quaternary structure, homomer.

The catalysed reaction is GTP + H2O = 7,8-dihydroneopterin 3'-triphosphate + formate + H(+). It participates in cofactor biosynthesis; 7,8-dihydroneopterin triphosphate biosynthesis; 7,8-dihydroneopterin triphosphate from GTP: step 1/1. This Mycolicibacterium paratuberculosis (strain ATCC BAA-968 / K-10) (Mycobacterium paratuberculosis) protein is GTP cyclohydrolase 1.